The chain runs to 300 residues: Acetylglutamate kinase (300 aa).

Substrate-binding positions include 73-74 (GG), Arg95, and Asn197.

Belongs to the acetylglutamate kinase family. ArgB subfamily.

Its subcellular location is the cytoplasm. The enzyme catalyses N-acetyl-L-glutamate + ATP = N-acetyl-L-glutamyl 5-phosphate + ADP. Its pathway is amino-acid biosynthesis; L-arginine biosynthesis; N(2)-acetyl-L-ornithine from L-glutamate: step 2/4. Its function is as follows. Catalyzes the ATP-dependent phosphorylation of N-acetyl-L-glutamate. In Bordetella pertussis (strain Tohama I / ATCC BAA-589 / NCTC 13251), this protein is Acetylglutamate kinase.